The primary structure comprises 384 residues: Monomeric sarcosine oxidase (384 aa).

6–36 is a binding site for FAD; sequence DVIVIGLGGMGSAAAHHLSARGARVLGLEKF. Cys-315 is modified (S-8alpha-FAD cysteine).

The protein belongs to the MSOX/MTOX family. MSOX subfamily. In terms of assembly, monomer. Requires FAD as cofactor.

Its subcellular location is the cytoplasm. It catalyses the reaction sarcosine + O2 + H2O = formaldehyde + glycine + H2O2. Catalyzes the oxidative demethylation of sarcosine. In Streptomyces avermitilis (strain ATCC 31267 / DSM 46492 / JCM 5070 / NBRC 14893 / NCIMB 12804 / NRRL 8165 / MA-4680), this protein is Monomeric sarcosine oxidase.